The primary structure comprises 290 residues: Large ribosomal subunit protein uL2m (290 aa).

It belongs to the universal ribosomal protein uL2 family. As to quaternary structure, probably part of the large ribosomal subunit.

It localises to the hydrogenosome. This Nyctotherus ovalis protein is Large ribosomal subunit protein uL2m (rpl2).